Here is a 480-residue protein sequence, read N- to C-terminus: Alpha-glucosidase (480 aa).

Residue 4 to 70 coordinates NAD(+); it reads VKIGIIGAGS…ADLKFEKTMN (67 aa). The substrate site is built by D119 and N153. C174 provides a ligand contact to Mn(2+). The Proton donor role is filled by H175. Residue H203 coordinates Mn(2+). Catalysis depends on D260, which acts as the Proton acceptor.

This sequence belongs to the glycosyl hydrolase 4 family. Homodimer. The cofactor is NAD(+). It depends on Mn(2+) as a cofactor. Co(2+) serves as cofactor. Ni(2+) is required as a cofactor.

It carries out the reaction Hydrolysis of terminal, non-reducing (1-&gt;4)-linked alpha-D-glucose residues with release of alpha-D-glucose.. Its activity is regulated as follows. Inhibited by Hg(2+) ion and EDTA. Functionally, alpha-glycosidase with a very broad specificity. Hydrolyzes maltose and other small maltooligosaccharides but is inactive against the polymeric substrate starch. AglA is not specific with respect to the configuration at the C-4 position of its substrates because glycosidic derivatives of D-galactose are also hydrolyzed. Does not cleave beta-glycosidic bonds. This chain is Alpha-glucosidase (aglA), found in Thermotoga maritima (strain ATCC 43589 / DSM 3109 / JCM 10099 / NBRC 100826 / MSB8).